The primary structure comprises 464 residues: MGYDFKVKLTGERERVEDLFEYEGCKVGRGTYGHVYKAKRKDGKDDRDYALKQIEGTGISMSACREIALLRELKHPNVISLQKVFLSHADRKVWLLFDYAEHDLWHIIKFHRASKANKKPLQLPRGMVKSLLYQILDGIHYLHANWVLHRDLKPANILVMGEGPERGRVKIADMGFARLSNSPLKPLADLDPVVVTFWYRAPELLLGARHYTKAIDIWAIGCIFAELLTSEPIFHCRQEDIKTSNPYHHDQLDRIFNVMGFPADKDWEDIKKMPEHSTLMKDFRRNTYTNCSLIKYMEKHKVKPDSKAFHLLQKLLTMDPIRRITSEQAMQDPYFLEEPLPTSDVFAGCQIPYPKREFLTEEEPEDKADKKNQQQQQGNNHTNGAGHTGNPDNSHAQGPPLKKVRVVPPTATSSGLIMTSDYQRSNPHAAYQNPGPSTSLPQSSMGYSSTSQQPPQYSHQTHRY.

Residues 1–15 (MGYDFKVKLTGERER) form an interaction with CCNC region. In terms of domain architecture, Protein kinase spans 21 to 335 (EYEGCKVGRG…SEQAMQDPYF (315 aa)). ATP-binding positions include 27-35 (VGRGTYGHV) and Lys52. Asp151 (proton acceptor) is an active-site residue. Residues 360–464 (TEEEPEDKAD…PQYSHQTHRY (105 aa)) are disordered. Low complexity predominate over residues 373-390 (QQQQQGNNHTNGAGHTGN). Polar residues-rich tracts occupy residues 410–426 (TATS…QRSN) and 434–446 (PGPS…SSMG). A compositionally biased stretch (low complexity) spans 447 to 464 (YSSTSQQPPQYSHQTHRY).

It belongs to the protein kinase superfamily. CMGC Ser/Thr protein kinase family. CDC2/CDKX subfamily. As to quaternary structure, component of the Mediator complex. Interacts with ccnc. Mg(2+) serves as cofactor.

Its subcellular location is the nucleus. It catalyses the reaction L-seryl-[protein] + ATP = O-phospho-L-seryl-[protein] + ADP + H(+). The catalysed reaction is L-threonyl-[protein] + ATP = O-phospho-L-threonyl-[protein] + ADP + H(+). The enzyme catalyses [DNA-directed RNA polymerase] + ATP = phospho-[DNA-directed RNA polymerase] + ADP + H(+). Component of the Mediator complex, a coactivator involved in regulated gene transcription of nearly all RNA polymerase II-dependent genes. Mediator functions as a bridge to convey information from gene-specific regulatory proteins to the basal RNA polymerase II transcription machinery. Mediator is recruited to promoters by direct interactions with regulatory proteins and serves as a scaffold for the assembly of a functional pre-initiation complex with RNA polymerase II and the general transcription factors. Phosphorylates the CTD (C-terminal domain) of the large subunit of RNA polymerase II (RNAp II), which may inhibit the formation of a transcription initiation complex. The protein is Cyclin-dependent kinase 8 (cdk8) of Danio rerio (Zebrafish).